The sequence spans 208 residues: Thymidylate kinase (208 aa).

10-17 (GLEGAGKS) provides a ligand contact to ATP.

It belongs to the thymidylate kinase family.

The catalysed reaction is dTMP + ATP = dTDP + ADP. In terms of biological role, phosphorylation of dTMP to form dTDP in both de novo and salvage pathways of dTTP synthesis. The sequence is that of Thymidylate kinase from Glaesserella parasuis serovar 5 (strain SH0165) (Haemophilus parasuis).